The primary structure comprises 79 residues: Spidroin-1 (79 aa).

This sequence belongs to the silk fibroin family. As to quaternary structure, major subunit, with spidroin 2, of the dragline silk.

It localises to the secreted. Its subcellular location is the extracellular space. Its function is as follows. Spiders' major ampullate silk possesses unique characteristics of strength and elasticity. Fibroin consists of pseudocrystalline regions of antiparallel beta-sheet interspersed with elastic amorphous segments. The sequence is that of Spidroin-1 from Araneus bicentenarius (Giant lichen orbweaver).